The sequence spans 1404 residues: MKDLLNLFNQQRQTLDFDAIKIALASPDLIRSWSYGEVKKPETINYRTFKPERDGLFCAAIFGPIKDYECLCGKYKRMKHRGVVCEKCGTEVTLAKVRRERMGHIDLASPVAHIWFLKSLPSRIGLMLDMTLRDIERVLYFEAYVVTEPGLTPLERRQLLTEEQYLTARQEYNDDFDAAMGAEAVYELLRTIDLQSEMTRLREEIASTGSETKLKRLTKRIKLIEAFLESGNRPEWMVMTVLPVLPPDLRPLVPLDGGRFATSDLNDLYRRVINRNNRLRRLLELNAPDIIVRNEKRMLQESVDALLDNGRRGRAITGTNKRPLKSLADMIKGKQGRFRQNLLGKRVDYSGRSVITVGPYLKLHQCGLPKKMALELFKPFVFAKLQRRGLATTIKAAKKLVEREEAEVWDILEEVIREHPVLLNRAPTLHRLGIQAFEPVLIEGKAIQLHPLVCTAFNADFDGDQMAVHVPLSLEAQLEARALMMSTNNILSPANGEPIIVPSQDVVLGLYYMSRALENKKGEGMVFANTSEVKRAYDNRVVELHAKVKVRITQVDVEAGGKRSSGTSIVDTTVGRALLSEILPEGLPFQLANTEMTKKNISRLINSSYRLLGLKDTVVFADKLMYTGYAYATRAGVSIGIDDMLIPDEKKGILTEAEAEVLEIQEQYQSGLVTAGERYNKVVDIWSRTSERIAKAMMDTIGTEKVENAKGETIDQKSMNSLYIMADSGARGSQAQIRQLAGMRGLMARPDGSIIETPIKANFREGLNVQEYFNSTHGARKGLADTALKTANSGYLTRRLVDVAQDVVITEIDCGTTEGLIMTPIVEGGDVVEPLRERVLGRVVAEDVYLPGNDEEPIVTRNTLLDEAWVAKLEDASVQSVKVRSTISCESSFGVCARCYGRDLARGHQVNIGEAVGVIAAQSIGEPGTQLTMRTFHIGGAASRAAAVDNITVKTTGSVKFNNLKSVAHASGSLVAVSRSGELSVLDGHGRERERYKLPYGATITAKDGDAVKAGQSVANWDPHNHPIVSEVAGFIRFIDFVDGVTVIEKTDELTGLASREITDPKRRGAQAKELRPIVRIVDAKGNDLTIPNTDLPAQYLLPPRSIVNLQDGAAVGVGDVVAKIPQEASKTRDITGGLPRVADLFEARKPKDPAILAERSGIISFGKDTKGKQRLIIKDTDGSEHEELIPKYRQIIVFEGEHVTKGETVVDGEPSPQDILRLLGVEPLAAYLVKEIQDVYRLQGVKINDKHIEVITRQMLRKVEIVDQGNSKFLNGEQVERQRVIEENARLVKRNELPAKYDPVLLGITKASLATESFISAASFQETTRVLTEAAVRGTRDNLRGLKENVIVGRLIPAGTGLAYHAGRRKASGLTDSEMETLSGKPAAAEPVAAVADAGADEE.

Zn(2+) contacts are provided by Cys70, Cys72, Cys85, and Cys88. Mg(2+) is bound by residues Asp460, Asp462, and Asp464. Zn(2+)-binding residues include Cys814, Cys889, Cys896, and Cys899. Positions 1377–1404 (DSEMETLSGKPAAAEPVAAVADAGADEE) are disordered. A compositionally biased stretch (low complexity) spans 1387–1404 (PAAAEPVAAVADAGADEE).

This sequence belongs to the RNA polymerase beta' chain family. The RNAP catalytic core consists of 2 alpha, 1 beta, 1 beta' and 1 omega subunit. When a sigma factor is associated with the core the holoenzyme is formed, which can initiate transcription. Mg(2+) serves as cofactor. Zn(2+) is required as a cofactor.

The catalysed reaction is RNA(n) + a ribonucleoside 5'-triphosphate = RNA(n+1) + diphosphate. Its function is as follows. DNA-dependent RNA polymerase catalyzes the transcription of DNA into RNA using the four ribonucleoside triphosphates as substrates. This chain is DNA-directed RNA polymerase subunit beta', found in Xanthomonas euvesicatoria pv. vesicatoria (strain 85-10) (Xanthomonas campestris pv. vesicatoria).